Here is a 942-residue protein sequence, read N- to C-terminus: UvrABC system protein A (942 aa).

Position 32–39 (32–39 (GLSGSGKS)) interacts with ATP. The segment at 251 to 278 (CPVCGFTVPELEPRLFSFNAPFGSCPTC) adopts a C4-type zinc-finger fold. 2 consecutive ABC transporter domains span residues 308–589 (WNPI…KKSI) and 609–937 (GNGR…HYLK). Position 641–648 (641–648 (GVSGSGKS)) interacts with ATP. Residues 740–766 (CEACSGDGIIKIEMHFLPDVYVPCEVC) form a C4-type zinc finger.

This sequence belongs to the ABC transporter superfamily. UvrA family. Forms a heterotetramer with UvrB during the search for lesions.

Its subcellular location is the cytoplasm. Its function is as follows. The UvrABC repair system catalyzes the recognition and processing of DNA lesions. UvrA is an ATPase and a DNA-binding protein. A damage recognition complex composed of 2 UvrA and 2 UvrB subunits scans DNA for abnormalities. When the presence of a lesion has been verified by UvrB, the UvrA molecules dissociate. This chain is UvrABC system protein A, found in Streptococcus pyogenes serotype M18 (strain MGAS8232).